Reading from the N-terminus, the 154-residue chain is Large ribosomal subunit protein bL9 (154 aa).

The protein belongs to the bacterial ribosomal protein bL9 family.

Functionally, binds to the 23S rRNA. This chain is Large ribosomal subunit protein bL9, found in Buchnera aphidicola subsp. Baizongia pistaciae (strain Bp).